The sequence spans 326 residues: Vomeronasal type-1 receptor 94 (326 aa).

At 1–32 the chain is on the extracellular side; sequence MSEILLFSPQPLFSYTMNKYSRLYTNSNIRNT. Residues 33–53 traverse the membrane as a helical segment; that stretch reads FFSEIGIGIAANSLLLLFHIF. Over 54-65 the chain is Cytoplasmic; the sequence is KFIRGQRSRLTD. Residues 66–86 form a helical membrane-spanning segment; that stretch reads LPIGLLSLIHLLKLLMIAFIA. At 87-110 the chain is on the extracellular side; the sequence is TDIFISWRGWDDIICKFLVYLYRS. A disulfide bridge links Cys-101 with Cys-188. Residues 111 to 130 traverse the membrane as a helical segment; that stretch reads FRGLSLCTTCMLSVLQAITL. Over 131 to 150 the chain is Cytoplasmic; it reads SPRSSCLAKFKHKSPHHVSC. The helical transmembrane segment at 151–171 threads the bilayer; it reads AILSLSVLYMFISSHLLVSLI. Over 172-203 the chain is Extracellular; that stretch reads ATPNLTTNVFMYVSESCSILPMSYLMQSMFST. Asn-175 carries N-linked (GlcNAc...) asparagine glycosylation. The chain crosses the membrane as a helical span at residues 204 to 224; sequence LLAIRDVFLISLMVLSTCYMV. At 225–254 the chain is on the cytoplasmic side; that stretch reads ALLCRHRKQTRHLQGTSLSPKASPEKKATH. Residues 255-275 traverse the membrane as a helical segment; the sequence is SILMLMSFFVLMSILDSIVSC. Residues 276 to 285 lie on the Extracellular side of the membrane; it reads SRTMFLYDPT. A helical membrane pass occupies residues 286–306; sequence SYAIQIFVSHIYATVSPFVFM. Residues 307 to 326 are Cytoplasmic-facing; that stretch reads SNEKHIVNFLRSLCKRVINV.

Belongs to the G-protein coupled receptor 1 family.

It localises to the cell membrane. Its function is as follows. Putative pheromone receptor implicated in the regulation of social as well as reproductive behavior. In Rattus norvegicus (Rat), this protein is Vomeronasal type-1 receptor 94 (Vom1r94).